The chain runs to 2169 residues: Vitellogenin-A1 (2169 aa).

The first 46 residues, 1 to 46, serve as a signal peptide directing secretion; the sequence is MATDGITSRFGFNERRRTHNRNSCRILEDKMLAKLLLLALAGLTAA. N-linked (GlcNAc...) asparagine glycans are attached at residues asparagine 107 and asparagine 125. Positions 116–1008 constitute a Vitellogenin domain; it reads WMPNYEYVYN…SNDHRYPSGL (893 aa). 2 positions are modified to sulfotyrosine: tyrosine 159 and tyrosine 163. N-linked (GlcNAc...) asparagine glycans are attached at residues asparagine 360, asparagine 391, and asparagine 435. Disordered regions lie at residues 426–481 and 514–570; these read DKKN…DKVE and NDTS…SSSE. Low complexity predominate over residues 438 to 461; that stretch reads SSSSSSSSSSSSSSSESSSSSSES. Asparagine 514 carries N-linked (GlcNAc...) asparagine glycosylation. Residues 517-531 show a composition bias toward low complexity; the sequence is SSDSSSSDSSSSSSS. Asparagine 538 carries N-linked (GlcNAc...) asparagine glycosylation. The span at 541–570 shows a compositional bias: low complexity; the sequence is SSYSSSSSSSSSSSSSESSSYSSSSSSSSE. 3 N-linked (GlcNAc...) asparagine glycosylation sites follow: asparagine 587, asparagine 763, and asparagine 781. 3 positions are modified to sulfotyrosine: tyrosine 1067, tyrosine 1070, and tyrosine 1074. 3 N-linked (GlcNAc...) asparagine glycosylation sites follow: asparagine 1140, asparagine 1233, and asparagine 1336. Residues tyrosine 1563, tyrosine 1564, and tyrosine 1570 each carry the sulfotyrosine modification. N-linked (GlcNAc...) asparagine glycosylation is found at asparagine 1652 and asparagine 1696. A sulfotyrosine mark is found at tyrosine 1737, tyrosine 1806, tyrosine 1809, tyrosine 1822, tyrosine 1824, and tyrosine 1888. The VWFD domain maps to 1770–1979; the sequence is PSCSFSNDYF…SYAITGQNCT (210 aa). 2 disulfide bridges follow: cysteine 1772-cysteine 1942 and cysteine 1794-cysteine 1978. Asparagine 1977 carries an N-linked (GlcNAc...) asparagine glycan. Residues 2026–2063 are compositionally biased toward low complexity; sequence EESSSSSSSSSSDSSSSSSSSESSSRSRSGSSSSSSSS. Residues 2026-2081 form a disordered region; the sequence is EESSSSSSSSSSDSSSSSSSSESSSRSRSGSSSSSSSSEEQKEFHPHKQEHSMKEC. The segment covering 2064–2079 has biased composition (basic and acidic residues); sequence EEQKEFHPHKQEHSMK.

In terms of processing, glycosylated, phosphorylated and sulfated. The large subunit is sulfated more extensively than the small one. In terms of tissue distribution, produced by the fat body, where it is cleaved in the rough endoplasmic reticulum or cis-Golgi before being secreted into hemolymph. It is then sequestered by a single class of receptor mediated endocytosis in the ovary.

Its function is as follows. Precursor of the egg-yolk proteins that are sources of nutrients during embryonic development. May supply aromatic amino acids to the cuticle of rapidly developing embryos. In Aedes aegypti (Yellowfever mosquito), this protein is Vitellogenin-A1 (VGA1).